A 146-amino-acid chain; its full sequence is Minor capsid protein P5 (146 aa).

As to quaternary structure, interacts with the major capsid protein.

The protein localises to the virion. Its function is as follows. One of the minor capsid proteins that constitute a network internal to the major capsid proteins and outside the lipid membrane. The minor capsid proteins glue and stabilize the capsomers. The polypeptide is Minor capsid protein P5 (Paramecium bursaria Chlorella virus 1 (PBCV-1)).